We begin with the raw amino-acid sequence, 1723 residues long: Homeobox protein 5 (1723 aa).

A compositionally biased stretch (low complexity) spans glutamine 36–glutamine 50. Disordered regions lie at residues glutamine 36–threonine 425, serine 440–glutamine 522, glutamate 543–threonine 756, glycine 878–leucine 978, isoleucine 1080–asparagine 1214, valine 1226–glutamine 1264, isoleucine 1345–serine 1399, glutamine 1456–threonine 1498, and histidine 1513–lysine 1547. Over residues aspartate 51–tyrosine 72 the composition is skewed to polar residues. Low complexity-rich tracts occupy residues asparagine 73–serine 107 and asparagine 114–asparagine 212. Composition is skewed to polar residues over residues serine 223 to proline 237 and glycine 244 to aspartate 257. Low complexity-rich tracts occupy residues asparagine 258 to serine 284 and asparagine 291 to asparagine 350. Residues tyrosine 300–glutamine 351 are a coiled coil. The span at glutamine 351–methionine 369 shows a compositional bias: polar residues. 2 stretches are compositionally biased toward low complexity: residues glutamine 371–serine 421 and serine 440–serine 465. Over residues methionine 483–asparagine 510 the composition is skewed to polar residues. 3 stretches are compositionally biased toward low complexity: residues leucine 511–glutamine 522, asparagine 544–asparagine 571, and asparagine 581–asparagine 593. The span at histidine 632–methionine 655 shows a compositional bias: polar residues. Positions leucine 660–phenylalanine 669 are enriched in gly residues. The segment covering isoleucine 673–glutamine 685 has biased composition (polar residues). 3 stretches are compositionally biased toward low complexity: residues serine 686–methionine 699, serine 710–leucine 727, and serine 734–threonine 745. The span at proline 746 to leucine 755 shows a compositional bias: pro residues. Over residues asparagine 882–threonine 928 the composition is skewed to low complexity. Polar residues predominate over residues serine 929–phenylalanine 945. Low complexity-rich tracts occupy residues glutamine 946–serine 977 and asparagine 1082–serine 1146. Polar residues-rich tracts occupy residues proline 1147–glycine 1159 and aspartate 1176–glutamine 1187. Residues glutamine 1193–leucine 1270 are a coiled coil. The span at glutamine 1194 to asparagine 1214 shows a compositional bias: low complexity. Residues valine 1226–glutamate 1242 show a composition bias toward polar residues. Low complexity-rich tracts occupy residues glutamine 1243–glutamine 1264, asparagine 1347–proline 1384, glutamine 1456–proline 1480, serine 1487–threonine 1498, and serine 1518–proline 1528. Positions valine 1431–threonine 1464 form a coiled coil. The span at histidine 1529–serine 1543 shows a compositional bias: polar residues. Residues serine 1543 to proline 1607 constitute a DNA-binding region (homeobox). Positions phenylalanine 1553–threonine 1588 constitute an EF-hand domain. Disordered regions lie at residues asparagine 1598–serine 1625 and leucine 1661–glutamate 1723. Residues threonine 1612–serine 1625 are compositionally biased toward low complexity. A coiled-coil region spans residues leucine 1632–asparagine 1702. Residues serine 1665–methionine 1675 are compositionally biased toward polar residues. Residues asparagine 1676 to glutamate 1723 show a composition bias toward low complexity.

Its subcellular location is the nucleus. Functionally, putative transcription factor. In Dictyostelium discoideum (Social amoeba), this protein is Homeobox protein 5 (hbx5-1).